We begin with the raw amino-acid sequence, 255 residues long: MRHPLVMGNWKLNGSTNLVNELIAGLRKELSTVDGCGVAIAPPAIYLDQANHQLAGSRIALGAQNVDVNLSGAFTGETSAEMLKDIGAKYIIIGHSERRTYHKESDEFIAKKFGVLKDAGLIPVLCIGETEAENEAGQTEAVCARQLDAVLNTLGAKAFENTVVAYEPVWAIGTGKSATPAQAQAVHKFIRDHIAKQDAAVAEQVIIQYGGSVNAANAAELFTQPDIDGALVGGASLKADAFAVIVKAAADAKRG.

Residue 9–11 (NWK) coordinates substrate. H95 functions as the Electrophile in the catalytic mechanism. Catalysis depends on E167, which acts as the Proton acceptor. Residues G173, S212, and 233 to 234 (GG) contribute to the substrate site.

It belongs to the triosephosphate isomerase family. As to quaternary structure, homodimer.

It is found in the cytoplasm. It catalyses the reaction D-glyceraldehyde 3-phosphate = dihydroxyacetone phosphate. It functions in the pathway carbohydrate biosynthesis; gluconeogenesis. It participates in carbohydrate degradation; glycolysis; D-glyceraldehyde 3-phosphate from glycerone phosphate: step 1/1. Involved in the gluconeogenesis. Catalyzes stereospecifically the conversion of dihydroxyacetone phosphate (DHAP) to D-glyceraldehyde-3-phosphate (G3P). The polypeptide is Triosephosphate isomerase (Pectobacterium atrosepticum (strain SCRI 1043 / ATCC BAA-672) (Erwinia carotovora subsp. atroseptica)).